A 53-amino-acid chain; its full sequence is Large ribosomal subunit protein bL33 (53 aa).

The protein belongs to the bacterial ribosomal protein bL33 family.

This Malacoplasma penetrans (strain HF-2) (Mycoplasma penetrans) protein is Large ribosomal subunit protein bL33.